Consider the following 146-residue polypeptide: Small ribosomal subunit protein bS16 (146 aa).

The span at 84-102 shows a compositional bias: basic and acidic residues; that stretch reads SHLEAQKAAVERLGRRKDY. The disordered stretch occupies residues 84 to 146; sequence SHLEAQKAAV…DAPAAEATTE (63 aa). The span at 110 to 119 shows a compositional bias: low complexity; that stretch reads APKAAPVAEA. A compositionally biased stretch (acidic residues) spans 120 to 130; that stretch reads PAEEAPAEEPA. Residues 131–146 are compositionally biased toward low complexity; the sequence is AEASTDDAPAAEATTE.

Belongs to the bacterial ribosomal protein bS16 family.

The polypeptide is Small ribosomal subunit protein bS16 (Rhodopirellula baltica (strain DSM 10527 / NCIMB 13988 / SH1)).